We begin with the raw amino-acid sequence, 494 residues long: Ketol-acid reductoisomerase (NADP(+)) (494 aa).

One can recognise a KARI N-terminal Rossmann domain in the interval 14–208 (LDQLGRCRFM…GGHRAGCLES (195 aa)). Residues 45-48 (CGAQ), R68, R76, S78, and 108-110 (DKQ) contribute to the NADP(+) site. Residue H132 is part of the active site. G158 contacts NADP(+). 2 consecutive KARI C-terminal knotted domains span residues 209-344 (SFVA…NYPA) and 345-487 (SDVE…MSDM). 4 residues coordinate Mg(2+): D217, E221, E389, and E393. S414 is a substrate binding site.

The protein belongs to the ketol-acid reductoisomerase family. Mg(2+) serves as cofactor.

The enzyme catalyses (2R)-2,3-dihydroxy-3-methylbutanoate + NADP(+) = (2S)-2-acetolactate + NADPH + H(+). It catalyses the reaction (2R,3R)-2,3-dihydroxy-3-methylpentanoate + NADP(+) = (S)-2-ethyl-2-hydroxy-3-oxobutanoate + NADPH + H(+). It participates in amino-acid biosynthesis; L-isoleucine biosynthesis; L-isoleucine from 2-oxobutanoate: step 2/4. It functions in the pathway amino-acid biosynthesis; L-valine biosynthesis; L-valine from pyruvate: step 2/4. In terms of biological role, involved in the biosynthesis of branched-chain amino acids (BCAA). Catalyzes an alkyl-migration followed by a ketol-acid reduction of (S)-2-acetolactate (S2AL) to yield (R)-2,3-dihydroxy-isovalerate. In the isomerase reaction, S2AL is rearranged via a Mg-dependent methyl migration to produce 3-hydroxy-3-methyl-2-ketobutyrate (HMKB). In the reductase reaction, this 2-ketoacid undergoes a metal-dependent reduction by NADPH to yield (R)-2,3-dihydroxy-isovalerate. This chain is Ketol-acid reductoisomerase (NADP(+)), found in Vibrio atlanticus (strain LGP32) (Vibrio splendidus (strain Mel32)).